The following is a 142-amino-acid chain: HTH-type transcriptional regulator LrpA1 (142 aa).

Residues 1 to 72 (MSTESTEERI…GQSIAMVGID (72 aa)) enclose the HTH asnC-type domain. Residues 22-41 (YAAIAERADVSKPTVRKYID) constitute a DNA-binding region (H-T-H motif).

Functionally, transcription factor that regulates genes involved in amino acid metabolism. Represses the aspB3 gene, coding for an aspartate transaminase, in the presence of L-aspartate. Another target gene is the basal transcriptional regulator tfbB. Also binds its own promoter. The sequence is that of HTH-type transcriptional regulator LrpA1 (lrpA1) from Halobacterium salinarum (strain ATCC 29341 / DSM 671 / R1).